A 127-amino-acid polypeptide reads, in one-letter code: Chondrosarcoma-associated gene 2/3 protein (127 aa).

Positions 68 to 127 (MSRKPRASSPLSNNHPPTPKRRGSGRHPLNPGPEALSKFPRQPGREKGPIKEVPGTKGSP) are disordered.

Weakly expressed in kidney. Expressed in various tumor cell lines including carcinomas, myeloid and lymphoid malignancies, melanomas and prostate cancer. Overexpressed in taxol-resistant breast cancer line MDA 435TR and the doxorubicin-resistant multiple myelanoma lines RPMI-8226/Dox40 and RPMI-8226/MDR10V.

Its function is as follows. Drug-resistance related protein, its expression is associated with the chemotherapy resistant and neoplastic phenotype. May also be linked to the malignant phenotype. The polypeptide is Chondrosarcoma-associated gene 2/3 protein (CSAG2) (Homo sapiens (Human)).